The primary structure comprises 192 residues: FMN-dependent NADH:quinone oxidoreductase 1 (192 aa).

Residues Ser9 and 15 to 17 each bind FMN; that span reads SYS.

Belongs to the azoreductase type 1 family. In terms of assembly, homodimer. Requires FMN as cofactor.

The enzyme catalyses 2 a quinone + NADH + H(+) = 2 a 1,4-benzosemiquinone + NAD(+). The catalysed reaction is N,N-dimethyl-1,4-phenylenediamine + anthranilate + 2 NAD(+) = 2-(4-dimethylaminophenyl)diazenylbenzoate + 2 NADH + 2 H(+). Quinone reductase that provides resistance to thiol-specific stress caused by electrophilic quinones. In terms of biological role, also exhibits azoreductase activity. Catalyzes the reductive cleavage of the azo bond in aromatic azo compounds to the corresponding amines. The chain is FMN-dependent NADH:quinone oxidoreductase 1 from Colwellia psychrerythraea (strain 34H / ATCC BAA-681) (Vibrio psychroerythus).